Reading from the N-terminus, the 775-residue chain is Mitosis inducer protein kinase cdr2 (775 aa).

Residues 10 to 262 (WELGLSLGSG…MEQIREHPFL (253 aa)) enclose the Protein kinase domain. ATP contacts are provided by residues 16-24 (LGSGGPNSS) and K39. The active-site Proton acceptor is D133. 3 positions are modified to phosphoserine: S309, S311, and S476. Over residues 549-563 (NNIDNNNYNQPYANA) the composition is skewed to low complexity. The tract at residues 549 to 620 (NNIDNNNYNQ…TKKKLSGSPF (72 aa)) is disordered. Over residues 584 to 593 (LSQSPASYDS) the composition is skewed to polar residues. S587 and S632 each carry phosphoserine.

It belongs to the protein kinase superfamily. CAMK Ser/Thr protein kinase family. NIM1 subfamily. In terms of assembly, interacts with blt1 and mid1. Post-translationally, autophosphorylated.

It catalyses the reaction L-seryl-[protein] + ATP = O-phospho-L-seryl-[protein] + ADP + H(+). It carries out the reaction L-threonyl-[protein] + ATP = O-phospho-L-threonyl-[protein] + ADP + H(+). Functionally, acts as a mitotic inducer. In G2 it negatively regulates wee1, a mitotic inhibitor. Also has a role in cytokinesis where it required for proper septum formation. This is Mitosis inducer protein kinase cdr2 (cdr2) from Schizosaccharomyces pombe (strain 972 / ATCC 24843) (Fission yeast).